A 63-amino-acid chain; its full sequence is Defensin-like protein 278 (63 aa).

Positions 1-15 (MSLVYMYMYIGVVMS) are cleaved as a signal peptide. 3 disulfides stabilise this stretch: C31–C48, C37–C53, and C41–C55.

The protein belongs to the DEFL family.

It localises to the secreted. The sequence is that of Defensin-like protein 278 from Arabidopsis thaliana (Mouse-ear cress).